We begin with the raw amino-acid sequence, 388 residues long: Succinate--CoA ligase [ADP-forming] subunit beta (388 aa).

Residues 9–244 (KEIFRSMGVA…LEEEDPKEIE (236 aa)) enclose the ATP-grasp domain. Residues Lys46, 53-55 (GRG), Glu99, Cys102, and Glu107 each bind ATP. Residues Asn199 and Asp213 each contribute to the Mg(2+) site. Substrate contacts are provided by residues Asn264 and 321–323 (GIM).

Belongs to the succinate/malate CoA ligase beta subunit family. In terms of assembly, heterotetramer of two alpha and two beta subunits. The cofactor is Mg(2+).

It catalyses the reaction succinate + ATP + CoA = succinyl-CoA + ADP + phosphate. The catalysed reaction is GTP + succinate + CoA = succinyl-CoA + GDP + phosphate. It functions in the pathway carbohydrate metabolism; tricarboxylic acid cycle; succinate from succinyl-CoA (ligase route): step 1/1. Succinyl-CoA synthetase functions in the citric acid cycle (TCA), coupling the hydrolysis of succinyl-CoA to the synthesis of either ATP or GTP and thus represents the only step of substrate-level phosphorylation in the TCA. The beta subunit provides nucleotide specificity of the enzyme and binds the substrate succinate, while the binding sites for coenzyme A and phosphate are found in the alpha subunit. This chain is Succinate--CoA ligase [ADP-forming] subunit beta, found in Staphylococcus haemolyticus (strain JCSC1435).